The following is a 470-amino-acid chain: Negative regulator of sexual conjugation and meiosis (470 aa).

The Protein kinase domain maps to 18 to 295 (LRFVSIIGAG…ITLPELSTLV (278 aa)). ATP-binding positions include 24–32 (IGAGAYGVV) and Lys-47. Asp-143 functions as the Proton acceptor in the catalytic mechanism. Ser-469 carries the post-translational modification Phosphoserine.

This sequence belongs to the protein kinase superfamily. Ser/Thr protein kinase family.

It catalyses the reaction L-seryl-[protein] + ATP = O-phospho-L-seryl-[protein] + ADP + H(+). The enzyme catalyses L-threonyl-[protein] + ATP = O-phospho-L-threonyl-[protein] + ADP + H(+). Functionally, this protein is a negative regulator of both sexual conjugation and meiosis. It phosphorylates mei2. It blocks the onset of meiosis until conjugation takes place. The polypeptide is Negative regulator of sexual conjugation and meiosis (ran1) (Schizosaccharomyces pombe (strain 972 / ATCC 24843) (Fission yeast)).